Consider the following 211-residue polypeptide: Protein-L-isoaspartate O-methyltransferase (211 aa).

Residue serine 60 is part of the active site.

This sequence belongs to the methyltransferase superfamily. L-isoaspartyl/D-aspartyl protein methyltransferase family.

The protein resides in the cytoplasm. The catalysed reaction is [protein]-L-isoaspartate + S-adenosyl-L-methionine = [protein]-L-isoaspartate alpha-methyl ester + S-adenosyl-L-homocysteine. Its function is as follows. Catalyzes the methyl esterification of L-isoaspartyl residues in peptides and proteins that result from spontaneous decomposition of normal L-aspartyl and L-asparaginyl residues. It plays a role in the repair and/or degradation of damaged proteins. In Pseudomonas syringae pv. tomato (strain ATCC BAA-871 / DC3000), this protein is Protein-L-isoaspartate O-methyltransferase.